A 131-amino-acid chain; its full sequence is Ribonuclease P protein component (131 aa).

The protein belongs to the RnpA family. As to quaternary structure, consists of a catalytic RNA component (M1 or rnpB) and a protein subunit.

The catalysed reaction is Endonucleolytic cleavage of RNA, removing 5'-extranucleotides from tRNA precursor.. RNaseP catalyzes the removal of the 5'-leader sequence from pre-tRNA to produce the mature 5'-terminus. It can also cleave other RNA substrates such as 4.5S RNA. The protein component plays an auxiliary but essential role in vivo by binding to the 5'-leader sequence and broadening the substrate specificity of the ribozyme. In Stutzerimonas stutzeri (strain A1501) (Pseudomonas stutzeri), this protein is Ribonuclease P protein component.